A 327-amino-acid polypeptide reads, in one-letter code: Serine/threonine-protein phosphatase PP2A catalytic subunit (327 aa).

Mn(2+) contacts are provided by Asp-75, His-77, Asp-103, and Asn-135. The Proton donor role is filled by His-136. Mn(2+) contacts are provided by His-185 and His-259. Leu-327 carries the leucine methyl ester modification.

It belongs to the PPP phosphatase family. PP-2A subfamily. It depends on Mn(2+) as a cofactor.

The enzyme catalyses O-phospho-L-seryl-[protein] + H2O = L-seryl-[protein] + phosphate. It catalyses the reaction O-phospho-L-threonyl-[protein] + H2O = L-threonyl-[protein] + phosphate. In Neurospora crassa (strain ATCC 24698 / 74-OR23-1A / CBS 708.71 / DSM 1257 / FGSC 987), this protein is Serine/threonine-protein phosphatase PP2A catalytic subunit (pph-1).